Consider the following 896-residue polypeptide: DNA mismatch repair protein MutS (896 aa).

607–614 contributes to the ATP binding site; it reads GPNMSGKS. Residues 809 to 835 form a disordered region; that stretch reads ANSVAPNTAASMPVEAADESQPVESET.

This sequence belongs to the DNA mismatch repair MutS family.

In terms of biological role, this protein is involved in the repair of mismatches in DNA. It is possible that it carries out the mismatch recognition step. This protein has a weak ATPase activity. This Lactiplantibacillus plantarum (strain ATCC BAA-793 / NCIMB 8826 / WCFS1) (Lactobacillus plantarum) protein is DNA mismatch repair protein MutS.